Consider the following 298-residue polypeptide: Acidic endochitinase (298 aa).

The signal sequence occupies residues 1-29 (MKPNMACLKQVSALLLPLLFISFFKPSHA). Residues 30 to 298 (GGISVYWGQN…GYSGAIIGSV (269 aa)) enclose the GH18 domain. Cystine bridges form between C49–C96 and C79–C86. E156 serves as the catalytic Proton donor. A disulfide bridge connects residues C185 and C214.

This sequence belongs to the glycosyl hydrolase 18 family. Chitinase class II subfamily.

It localises to the secreted. The protein localises to the extracellular space. It catalyses the reaction Random endo-hydrolysis of N-acetyl-beta-D-glucosaminide (1-&gt;4)-beta-linkages in chitin and chitodextrins.. In terms of biological role, this protein functions as a defense against chitin containing fungal pathogens. The chain is Acidic endochitinase from Phaseolus angularis (Azuki bean).